The primary structure comprises 408 residues: Protein EcsB (408 aa).

Helical transmembrane passes span 30-50 (HLVI…SKWI), 53-73 (IPAH…VLTS), 111-131 (LFPL…VTPG), 134-154 (LVSY…NQVM), 180-200 (LVLY…YVIM), 284-304 (YLGI…YVSA), 308-328 (IAAV…LPLF), 351-371 (YFSL…VASA), and 374-394 (AGLT…FVVL).

It localises to the cell membrane. In terms of biological role, presumed to form part of an ABC-transporter, it may form a transport channel. The polypeptide is Protein EcsB (ecsB) (Bacillus subtilis (strain 168)).